Here is a 375-residue protein sequence, read N- to C-terminus: Trichodiene synthase (375 aa).

It belongs to the trichodiene synthase family.

It catalyses the reaction (2E,6E)-farnesyl diphosphate = trichodiene + diphosphate. The protein operates within sesquiterpene biosynthesis; trichothecene biosynthesis. TS is a member of the terpene cyclase group of enzymes. It catalyzes the isomerization and cyclization of farnesyl pyro-phosphate to form trichodiene, the first cyclic intermediate in the biosynthetic pathway for trichothecenes. It serves to branch trichothecene biosynthesis from the isoprenoid pathway. The protein is Trichodiene synthase (TRI5) of Gibberella zeae (strain ATCC MYA-4620 / CBS 123657 / FGSC 9075 / NRRL 31084 / PH-1) (Wheat head blight fungus).